A 701-amino-acid polypeptide reads, in one-letter code: Meprin A subunit beta (701 aa).

Residues 1 to 22 (MDLWNLSWFLFLDALLVISGLA) form the signal peptide. The propeptide occupies 23–61 (TPENFDVDGGMDQDIFDINEGLGLDLFEGDIRLDRAQIR). Residues 23–652 (TPENFDVDGG…CEKRGSTRDT (630 aa)) lie on the Extracellular side of the membrane. Residues 62 to 256 (NSIIGEKYRW…LKLNQLYNCS (195 aa)) form the Peptidase M12A domain. 3 disulfide bridges follow: cysteine 103/cysteine 255, cysteine 124/cysteine 144, and cysteine 265/cysteine 427. Residue histidine 152 participates in Zn(2+) binding. Glutamate 153 is a catalytic residue. Zn(2+) is bound by residues histidine 156 and histidine 162. 8 N-linked (GlcNAc...) asparagine glycosylation sites follow: asparagine 218, asparagine 254, asparagine 370, asparagine 421, asparagine 436, asparagine 445, asparagine 547, and asparagine 592. An MAM domain is found at 260 to 429 (SFMDSCSFEL…INLSETRCPH (170 aa)). In terms of domain architecture, MATH spans 430–585 (HIWHIRNFTQ…GDDVYILLTV (156 aa)). Serine 593 is a glycosylation site (O-linked (GalNAc...) serine). Residues threonine 594 and threonine 599 are each glycosylated (O-linked (GalNAc...) threonine). The segment at 595–607 (QIQLTPAPSVQDL) is required for proteolytic processing. The O-linked (GalNAc...) serine glycan is linked to serine 603. One can recognise an EGF-like domain in the interval 604–644 (VQDLCSKTTCKNDGVCTVRDGKAECRCQSGEDWWYMGERCE). Intrachain disulfides connect cysteine 608–cysteine 619, cysteine 613–cysteine 628, and cysteine 630–cysteine 643. The helical transmembrane segment at 653-673 (IVIAVSSTVAVFALMLIITLV) threads the bilayer. Residues 674–701 (SVYCTRKKYRERMSSNRPNLTPQNQHAF) are Cytoplasmic-facing. Position 694 is a phosphothreonine (threonine 694).

In terms of assembly, homotetramer consisting of disulfide-linked beta subunits, or heterotetramer of two alpha and two beta subunits formed by non-covalent association of two disulfide-linked heterodimers. Interacts with MBL2 through its carbohydrate moiety. This interaction may inhibit its catalytic activity. Interacts with TSPAN8. Zn(2+) is required as a cofactor. In terms of processing, phosphorylated by PKC at multiple sites of its cytoplasmic part. Phosphorylation dcreases activity at the cell surface, leading to diminished substrate cleavage. N-glycosylated; contains high mannose and/or complex biantennary structures. Post-translationally, O-glycosylation protect the C-terminal region from proteolytic cleavage and diminish secretion, this seems to be specific to human. In terms of processing, proteolytically activated by trypsin in the intestinal lumen and kallikrein-related peptidases in other tissues. The major site of expression is the brush border membrane of small intestinal and kidney epithelial cells.

Its subcellular location is the cell membrane. It localises to the secreted. The enzyme catalyses Hydrolysis of proteins, including azocasein, and peptides. Hydrolysis of 5-His-|-Leu-6, 6-Leu-|-Cys-7, 14-Ala-|-Leu-15 and 19-Cys-|-Gly-20 bonds in insulin B chain.. Its activity is regulated as follows. Strongly inhibited by fetuin-A/AHSG. In terms of biological role, membrane metallopeptidase that sheds many membrane-bound proteins. Exhibits a strong preference for acidic amino acids at the P1' position. Known substrates include: FGF19, VGFA, IL1B, IL18, procollagen I and III, E-cadherin, KLK7, gastrin, ADAM10, tenascin-C. The presence of several pro-inflammatory cytokine among substrates implicate MEP1B in inflammation. It is also involved in tissue remodeling due to its capability to degrade extracellular matrix components. Also cleaves the amyloid precursor protein/APP, thereby releasing neurotoxic amyloid beta peptides. The protein is Meprin A subunit beta (MEP1B) of Homo sapiens (Human).